We begin with the raw amino-acid sequence, 312 residues long: uncharacterized protein (312 aa).

The disordered stretch occupies residues 95–119 (EKRRENPPKLTLPPLPPPAEERKKP).

The protein resides in the plastid. It localises to the chloroplast. This is an uncharacterized protein from Chlamydomonas moewusii (Chlamydomonas eugametos).